A 652-amino-acid chain; its full sequence is Endoplasmic reticulum chaperone BiP (652 aa).

The signal sequence occupies residues 1–16 (MRHLLLALLLLGGARA). ATP contacts are provided by residues 34-37 (GTTY), lysine 94, 225-227 (GGT), 291-298 (EKAKRALS), and 362-365 (GSTR). The nucleotide-binding (NBD) stretch occupies residues 123 to 278 (KPHIQVDVGG…KKKTGKDVRK (156 aa)). The interdomain linker stretch occupies residues 407 to 417 (QDTGDLVLLDV). The substrate-binding (SBD) stretch occupies residues 418–498 (CPLTLGIETV…PRGVPQIEVT (81 aa)). The disordered stretch occupies residues 630–652 (SKLYGSAGPPPTGEEEAAEKDEL). Residues 642–652 (GEEEAAEKDEL) show a composition bias toward acidic residues. The Prevents secretion from ER motif lies at 649-652 (KDEL).

This sequence belongs to the heat shock protein 70 family. In terms of assembly, monomer and homooligomer; homooligomerization via the interdomain linker inactivates the chaperone activity and acts as a storage of HSPA5/BiP molecules. Interacts with DNAJC10. Interacts with DNAJB9/ERdj4; leading to recruit HSPA5/BiP to ERN1/IRE1. Interacts with ERN1/IRE1; interaction takes place following interaction with DNAJB9/ERdj4 and leads to inactivate ERN1/IRE1.

Its subcellular location is the endoplasmic reticulum lumen. It localises to the melanosome. The protein resides in the cytoplasm. It is found in the cell surface. It carries out the reaction ATP + H2O = ADP + phosphate + H(+). Its activity is regulated as follows. The chaperone activity is regulated by ATP-induced allosteric coupling of the nucleotide-binding (NBD) and substrate-binding (SBD) domains. In the ADP-bound and nucleotide-free (apo) states, the two domains have little interaction. In contrast, in the ATP-bound state the two domains are tightly coupled, which results in drastically accelerated kinetics in both binding and release of polypeptide substrates. J domain-containing co-chaperones (DNAJB9/ERdj4 or DNAJC10/ERdj5) stimulate the ATPase activity and are required for efficient substrate recognition by HSPA5/BiP. Homooligomerization inactivates participating HSPA5/BiP protomers and probably act as reservoirs to store HSPA5/BiP molecules when they are not needed by the cell. In terms of biological role, endoplasmic reticulum chaperone that plays a key role in protein folding and quality control in the endoplasmic reticulum lumen. Involved in the correct folding of proteins and degradation of misfolded proteins via its interaction with DNAJC10/ERdj5, probably to facilitate the release of DNAJC10/ERdj5 from its substrate. Acts as a key repressor of the EIF2AK3/PERK and ERN1/IRE1-mediated unfolded protein response (UPR). In the unstressed endoplasmic reticulum, recruited by DNAJB9/ERdj4 to the luminal region of ERN1/IRE1, leading to disrupt the dimerization of ERN1/IRE1, thereby inactivating ERN1/IRE1. Also binds and inactivates EIF2AK3/PERK in unstressed cells. Accumulation of misfolded protein in the endoplasmic reticulum causes release of HSPA5/BiP from ERN1/IRE1 and EIF2AK3/PERK, allowing their homodimerization and subsequent activation. May also play a role in apoptosis and cell proliferation. The polypeptide is Endoplasmic reticulum chaperone BiP (Gallus gallus (Chicken)).